A 723-amino-acid polypeptide reads, in one-letter code: Fatty acid oxidation complex subunit alpha (723 aa).

Residues 1–189 (MIYQAETLQV…KIGLLDAVVD (189 aa)) form an enoyl-CoA hydratase/isomerase region. Position 296 (Asp-296) interacts with substrate. Residues 311-723 (NKETQRAAVL…FYGAQQQGSI (413 aa)) form a 3-hydroxyacyl-CoA dehydrogenase region. NAD(+) contacts are provided by residues Met-325, Asp-344, 401–403 (VVE), Lys-408, and Ser-430. The For 3-hydroxyacyl-CoA dehydrogenase activity role is filled by His-451. Residue Asn-454 participates in NAD(+) binding. The substrate site is built by Asn-501 and Tyr-661.

In the N-terminal section; belongs to the enoyl-CoA hydratase/isomerase family. This sequence in the C-terminal section; belongs to the 3-hydroxyacyl-CoA dehydrogenase family. As to quaternary structure, heterotetramer of two alpha chains (FadB) and two beta chains (FadA).

The enzyme catalyses a (3S)-3-hydroxyacyl-CoA + NAD(+) = a 3-oxoacyl-CoA + NADH + H(+). It catalyses the reaction a (3S)-3-hydroxyacyl-CoA = a (2E)-enoyl-CoA + H2O. It carries out the reaction a 4-saturated-(3S)-3-hydroxyacyl-CoA = a (3E)-enoyl-CoA + H2O. The catalysed reaction is (3S)-3-hydroxybutanoyl-CoA = (3R)-3-hydroxybutanoyl-CoA. The enzyme catalyses a (3Z)-enoyl-CoA = a 4-saturated (2E)-enoyl-CoA. It catalyses the reaction a (3E)-enoyl-CoA = a 4-saturated (2E)-enoyl-CoA. Its pathway is lipid metabolism; fatty acid beta-oxidation. Its function is as follows. Involved in the aerobic and anaerobic degradation of long-chain fatty acids via beta-oxidation cycle. Catalyzes the formation of 3-oxoacyl-CoA from enoyl-CoA via L-3-hydroxyacyl-CoA. It can also use D-3-hydroxyacyl-CoA and cis-3-enoyl-CoA as substrate. The sequence is that of Fatty acid oxidation complex subunit alpha from Vibrio vulnificus (strain YJ016).